Consider the following 1305-residue polypeptide: Cyclin-G-associated kinase (1305 aa).

At serine 2 the chain carries N-acetylserine. Phosphoserine occurs at positions 2 and 16. The Protein kinase domain occupies 40–317 (LRVRRVLAEG…EVVRQLQEIA (278 aa)). Residues 46–54 (LAEGGFAFV) and lysine 69 contribute to the ATP site. The active-site Proton acceptor is the aspartate 173. Residues 397-564 (SVANYAKGDL…EYVCDMVAEE (168 aa)) enclose the Phosphatase tensin-type domain. At serine 454 the chain carries Phosphoserine. Residues 570–708 (SKPMLVKSVV…FQVNLEVEVE (139 aa)) form the C2 tensin-type domain. 2 disordered regions span residues 707-732 (VEPR…NPKI) and 747-854 (FGKP…AAGT). Serine 768 carries the phosphoserine modification. The residue at position 774 (threonine 774) is a Phosphothreonine. Positions 776 to 789 (SDSPQSSSTDTNHF) are enriched in polar residues. Serine 781 bears the Phosphoserine mark. Phosphothreonine is present on threonine 792. The segment covering 805–816 (LDNTSPKESQSV) has biased composition (polar residues). Residues serine 809, serine 824, and serine 827 each carry the phosphoserine modification. A compositionally biased stretch (acidic residues) spans 822–832 (DGSEVSDEEEA). The segment covering 836–848 (SEERKPGAGEDTP) has biased composition (basic and acidic residues). Position 938 is a phosphoserine (serine 938). The interval 1037 to 1139 (DTWADTATPG…WTPQAKPAPR (103 aa)) is disordered. Residues 1084–1099 (DLSDLSSSLQGLPAGL) show a composition bias toward low complexity. Residues 1111–1132 (TQKSNSPWQANRPTAPGTSWTP) show a composition bias toward polar residues. Omega-N-methylarginine is present on arginine 1122. Serine 1171 is subject to Phosphoserine. The J domain maps to 1241 to 1305 (SRWTPVSMAD…FENQGSRPLF (65 aa)).

It belongs to the protein kinase superfamily. Ser/Thr protein kinase family.

The protein resides in the cytoplasm. Its subcellular location is the perinuclear region. It localises to the golgi apparatus. The protein localises to the trans-Golgi network. It is found in the cell junction. The protein resides in the focal adhesion. Its subcellular location is the cytoplasmic vesicle. It localises to the clathrin-coated vesicle. The enzyme catalyses L-seryl-[protein] + ATP = O-phospho-L-seryl-[protein] + ADP + H(+). The catalysed reaction is L-threonyl-[protein] + ATP = O-phospho-L-threonyl-[protein] + ADP + H(+). Its function is as follows. Associates with cyclin G and CDK5. Seems to act as an auxilin homolog that is involved in the uncoating of clathrin-coated vesicles by Hsc70 in non-neuronal cells. Expression oscillates slightly during the cell cycle, peaking at G1. May play a role in clathrin-mediated endocytosis and intracellular trafficking, and in the dynamics of clathrin assembly/disassembly. The polypeptide is Cyclin-G-associated kinase (Mus musculus (Mouse)).